A 427-amino-acid polypeptide reads, in one-letter code: Adenylosuccinate synthetase (427 aa).

Residues 12 to 18 (GDEGKGK) and 40 to 42 (GHT) each bind GTP. Asp-13 functions as the Proton acceptor in the catalytic mechanism. 2 residues coordinate Mg(2+): Asp-13 and Gly-40. IMP is bound by residues 13 to 16 (DEGK), 38 to 41 (NAGH), Thr-130, Arg-144, Gln-224, Thr-239, and Arg-303. Catalysis depends on His-41, which acts as the Proton donor. 299 to 305 (SVTGRPR) provides a ligand contact to substrate. GTP contacts are provided by residues Arg-305, 331–333 (KLD), and 411–413 (SVG).

This sequence belongs to the adenylosuccinate synthetase family. As to quaternary structure, homodimer. Mg(2+) is required as a cofactor.

It is found in the cytoplasm. It catalyses the reaction IMP + L-aspartate + GTP = N(6)-(1,2-dicarboxyethyl)-AMP + GDP + phosphate + 2 H(+). It functions in the pathway purine metabolism; AMP biosynthesis via de novo pathway; AMP from IMP: step 1/2. Its function is as follows. Plays an important role in the de novo pathway of purine nucleotide biosynthesis. Catalyzes the first committed step in the biosynthesis of AMP from IMP. This chain is Adenylosuccinate synthetase, found in Sorangium cellulosum (strain So ce56) (Polyangium cellulosum (strain So ce56)).